The primary structure comprises 224 residues: DeSI-like protein At4g17486 (224 aa).

The region spanning 26 to 163 (TPVYLNVYDL…FCNCLLPESI (138 aa)) is the PPPDE domain. Catalysis depends on residues H51 and C125. Residues 176-201 (EFSDEDESNSEASSVSDEEGSEQHLI) are disordered.

Belongs to the DeSI family.

This is DeSI-like protein At4g17486 from Arabidopsis thaliana (Mouse-ear cress).